A 426-amino-acid chain; its full sequence is DNA polymerase processivity factor component OPG148 (426 aa).

It belongs to the orthopoxvirus OPG148 family. As to quaternary structure, interacts with the DNA polymerase catalytic subunit OPG071. Interacts with UDG/OPG116. Component of the uracil-DNA glycosylase(UDG)-OPG148-polymerase complex; OPG148 and UDG form a heterodimeric processivity factor that associates with OPG071 to form the processive polymerase holoenzyme. Interacts with OPG117.

Functionally, plays an essential role in viral DNA replication by acting as the polymerase processivity factor together with protein OPG116. Serves as a bridge which links the DNA polymerase OPG071 and the uracil DNA glycosylase. In Variola virus (isolate Human/India/Ind3/1967) (VARV), this protein is DNA polymerase processivity factor component OPG148 (OPG148).